We begin with the raw amino-acid sequence, 350 residues long: Protein RecA (350 aa).

65 to 72 (GPESSGKT) lines the ATP pocket. Positions 329-350 (ASPDVKANPVKETEDDMADADI) are disordered. The span at 341–350 (TEDDMADADI) shows a compositional bias: acidic residues.

The protein belongs to the RecA family.

It is found in the cytoplasm. Its function is as follows. Can catalyze the hydrolysis of ATP in the presence of single-stranded DNA, the ATP-dependent uptake of single-stranded DNA by duplex DNA, and the ATP-dependent hybridization of homologous single-stranded DNAs. It interacts with LexA causing its activation and leading to its autocatalytic cleavage. The chain is Protein RecA from Pseudomonas fluorescens (strain ATCC BAA-477 / NRRL B-23932 / Pf-5).